A 494-amino-acid chain; its full sequence is Rhamnulokinase (494 aa).

An ATP-binding site is contributed by 18-22 (ASSGR). Substrate-binding positions include Gly87 and 242-244 (HDT). The Proton acceptor role is filled by Asp243. Residue Thr265 participates in ATP binding. Residue Asn302 participates in substrate binding. Gln310 is a binding site for ATP. Cys360 and Cys377 form a disulfide bridge. Gly411 lines the ATP pocket.

This sequence belongs to the rhamnulokinase family. Requires Mg(2+) as cofactor.

The enzyme catalyses L-rhamnulose + ATP = L-rhamnulose 1-phosphate + ADP + H(+). It functions in the pathway carbohydrate degradation; L-rhamnose degradation; glycerone phosphate from L-rhamnose: step 2/3. Its function is as follows. Involved in the catabolism of L-rhamnose (6-deoxy-L-mannose). Catalyzes the transfer of the gamma-phosphate group from ATP to the 1-hydroxyl group of L-rhamnulose to yield L-rhamnulose 1-phosphate. In Enterococcus faecalis (strain ATCC 700802 / V583), this protein is Rhamnulokinase.